Consider the following 395-residue polypeptide: Xylose isomerase (395 aa).

Catalysis depends on residues His-54 and Glu-57. Residues 80 to 108 (AVPAGAGRDRHEGADGDDEPVHAPGCSRD) are disordered. Mg(2+)-binding residues include Glu-189, Glu-225, His-228, Asp-253, Asp-263, Asp-265, and Asp-295.

It belongs to the xylose isomerase family. In terms of assembly, homotetramer. Mg(2+) serves as cofactor.

Its subcellular location is the cytoplasm. It catalyses the reaction alpha-D-xylose = alpha-D-xylulofuranose. The polypeptide is Xylose isomerase (Streptomyces lividans).